A 289-amino-acid polypeptide reads, in one-letter code: Protoheme IX farnesyltransferase (289 aa).

Transmembrane regions (helical) follow at residues 9–29 (VALMKLRVVELLLITTVPVMM), 40–60 (LIAVTLVAGTLAAGSANTINC), 89–109 (LTFGIVIGIVSTLLFGFLVNW), 110–130 (PSALLADGAIAFYVFVYTLGL), 134–154 (TPSNIVIGGAAGCFPVLIGWS), 155–175 (AVTGTVGWAAVLLFAVVFFWT), 190–209 (YAAAGVPMLPVVASVQVVTR), 228–248 (VASTGPVYLVAAVAVGAWFLV), and 269–289 (FHMSITYLTLLFVAIAVTALV).

Belongs to the UbiA prenyltransferase family. Protoheme IX farnesyltransferase subfamily.

The protein resides in the cell membrane. The enzyme catalyses heme b + (2E,6E)-farnesyl diphosphate + H2O = Fe(II)-heme o + diphosphate. It participates in porphyrin-containing compound metabolism; heme O biosynthesis; heme O from protoheme: step 1/1. Its function is as follows. Converts heme B (protoheme IX) to heme O by substitution of the vinyl group on carbon 2 of heme B porphyrin ring with a hydroxyethyl farnesyl side group. The protein is Protoheme IX farnesyltransferase of Frankia casuarinae (strain DSM 45818 / CECT 9043 / HFP020203 / CcI3).